A 521-amino-acid polypeptide reads, in one-letter code: MHLNLAGLAVAATAFLATASALSPQDIPADLPVSNLLTKAQTHLSRGETNEALVYYDAAIARDPTNYLSLFKRATAYLSLGRTSQATEDFNKVLSLKPGFEGAHLQLARLRAKAGDWDAAKAQYGLAGKAPKSAEFVELEEAKLAAHLADMASKGGKWEECVSHAGTAIVVASRSPHLRELRAHCRFELGDVELALSDLQHVLHMKPGDTSPHIVISATSFYALGDLENGIGQVKKCLQSDPDSKICKKLHKQEKKVEKAYKKIQGQLSRGQPTTAGRALVGTADDSGLVPDVRKQVEELKKNKSIPKTARIQLLENLIEMTCQAYTESSHKEAAKYCDESLQLNPDSFWGLLHKGKAQLKSELYDAAIATLEKAAEIRPDQKEKVNPILNKAHIALKRSKTKDYYKVLGVENDADERQIKSAYRKQSKIFHPDKAAKQGIPKEEAEKKMASINEAYEVLSDPELRARFDRGDDPNSQERPNPFQGQGNPFGGGHPFMFQQGGGGGGPNIKFQFGGQPFGF.

The N-terminal stretch at 1–21 is a signal peptide; that stretch reads MHLNLAGLAVAATAFLATASA. TPR repeat units follow at residues 33-66, 67-100, 102-134, 176-209, 211-244, 315-348, and 349-382; these read VSNL…DPTN, YLSL…KPGF, GAHL…PKSA, PHLR…KPGD, SPHI…DPDS, LENL…NPDS, and FWGL…RPDQ. Residues 404-473 form the J domain; that stretch reads DYYKVLGVEN…ELRARFDRGD (70 aa). Positions 464–474 are enriched in basic and acidic residues; the sequence is ELRARFDRGDD. The segment at 464-521 is disordered; that stretch reads ELRARFDRGDDPNSQERPNPFQGQGNPFGGGHPFMFQQGGGGGGPNIKFQFGGQPFGF. A compositionally biased stretch (gly residues) spans 489 to 508; it reads NPFGGGHPFMFQQGGGGGGP. Over residues 509–521 the composition is skewed to low complexity; that stretch reads NIKFQFGGQPFGF.

It is found in the endoplasmic reticulum lumen. Endoplasmic reticulum co-chaperone required for the of virulence factors such as PG1, the major endopolygalacturonase produced during the infection of tomato plants. This chain is Tetratricopeptide repeat and J domain-containing co-chaperone DNJ1, found in Fusarium oxysporum f. sp. lycopersici (strain 4287 / CBS 123668 / FGSC 9935 / NRRL 34936) (Fusarium vascular wilt of tomato).